The chain runs to 252 residues: Type III pantothenate kinase (252 aa).

6–13 (DIGNTNIV) contacts ATP. 107-110 (GADL) lines the substrate pocket. The active-site Proton acceptor is D109. Residue D129 participates in K(+) binding. An ATP-binding site is contributed by T132. Substrate is bound at residue T184.

This sequence belongs to the type III pantothenate kinase family. In terms of assembly, homodimer. Requires NH4(+) as cofactor. It depends on K(+) as a cofactor.

It is found in the cytoplasm. The enzyme catalyses (R)-pantothenate + ATP = (R)-4'-phosphopantothenate + ADP + H(+). It functions in the pathway cofactor biosynthesis; coenzyme A biosynthesis; CoA from (R)-pantothenate: step 1/5. Functionally, catalyzes the phosphorylation of pantothenate (Pan), the first step in CoA biosynthesis. The polypeptide is Type III pantothenate kinase (Bifidobacterium animalis subsp. lactis (strain AD011)).